We begin with the raw amino-acid sequence, 424 residues long: Histidine--tRNA ligase (424 aa).

It belongs to the class-II aminoacyl-tRNA synthetase family. In terms of assembly, homodimer.

It is found in the cytoplasm. It catalyses the reaction tRNA(His) + L-histidine + ATP = L-histidyl-tRNA(His) + AMP + diphosphate + H(+). In Shigella flexneri, this protein is Histidine--tRNA ligase.